The following is a 620-amino-acid chain: 1-deoxy-D-xylulose-5-phosphate synthase (620 aa).

Thiamine diphosphate-binding positions include histidine 80 and 121-123; that span reads GHS. Aspartate 152 contacts Mg(2+). Residues 153-154, asparagine 181, tyrosine 288, and glutamate 370 contribute to the thiamine diphosphate site; that span reads GA. Residue asparagine 181 participates in Mg(2+) binding.

It belongs to the transketolase family. DXPS subfamily. In terms of assembly, homodimer. It depends on Mg(2+) as a cofactor. Thiamine diphosphate is required as a cofactor.

The enzyme catalyses D-glyceraldehyde 3-phosphate + pyruvate + H(+) = 1-deoxy-D-xylulose 5-phosphate + CO2. The protein operates within metabolic intermediate biosynthesis; 1-deoxy-D-xylulose 5-phosphate biosynthesis; 1-deoxy-D-xylulose 5-phosphate from D-glyceraldehyde 3-phosphate and pyruvate: step 1/1. In terms of biological role, catalyzes the acyloin condensation reaction between C atoms 2 and 3 of pyruvate and glyceraldehyde 3-phosphate to yield 1-deoxy-D-xylulose-5-phosphate (DXP). This is 1-deoxy-D-xylulose-5-phosphate synthase from Photobacterium profundum (strain SS9).